Reading from the N-terminus, the 453-residue chain is Bifunctional protein GlmU (453 aa).

The interval 1 to 228 is pyrophosphorylase; that stretch reads MPHWAAVIMA…VHEALGINSR (228 aa). UDP-N-acetyl-alpha-D-glucosamine contacts are provided by residues lysine 23, glutamine 73, 78-79, 100-102, glycine 139, glutamate 153, asparagine 168, and asparagine 226; these read GT and SGD. Aspartate 102 provides a ligand contact to Mg(2+). Asparagine 226 provides a ligand contact to Mg(2+). Positions 229 to 249 are linker; that stretch reads AQLAAAEDVARQRILSYWMEE. The N-acetyltransferase stretch occupies residues 250-453; sequence GVTIIDPRST…IENWVRNKKK (204 aa). Positions 331 and 349 each coordinate UDP-N-acetyl-alpha-D-glucosamine. The active-site Proton acceptor is histidine 361. UDP-N-acetyl-alpha-D-glucosamine is bound by residues tyrosine 364 and asparagine 375. Acetyl-CoA contacts are provided by residues alanine 378, 384-385, serine 403, alanine 421, and arginine 438; that span reads NY.

This sequence in the N-terminal section; belongs to the N-acetylglucosamine-1-phosphate uridyltransferase family. The protein in the C-terminal section; belongs to the transferase hexapeptide repeat family. As to quaternary structure, homotrimer. Mg(2+) is required as a cofactor.

The protein localises to the cytoplasm. It carries out the reaction alpha-D-glucosamine 1-phosphate + acetyl-CoA = N-acetyl-alpha-D-glucosamine 1-phosphate + CoA + H(+). The enzyme catalyses N-acetyl-alpha-D-glucosamine 1-phosphate + UTP + H(+) = UDP-N-acetyl-alpha-D-glucosamine + diphosphate. It participates in nucleotide-sugar biosynthesis; UDP-N-acetyl-alpha-D-glucosamine biosynthesis; N-acetyl-alpha-D-glucosamine 1-phosphate from alpha-D-glucosamine 6-phosphate (route II): step 2/2. The protein operates within nucleotide-sugar biosynthesis; UDP-N-acetyl-alpha-D-glucosamine biosynthesis; UDP-N-acetyl-alpha-D-glucosamine from N-acetyl-alpha-D-glucosamine 1-phosphate: step 1/1. Its pathway is bacterial outer membrane biogenesis; LPS lipid A biosynthesis. In terms of biological role, catalyzes the last two sequential reactions in the de novo biosynthetic pathway for UDP-N-acetylglucosamine (UDP-GlcNAc). The C-terminal domain catalyzes the transfer of acetyl group from acetyl coenzyme A to glucosamine-1-phosphate (GlcN-1-P) to produce N-acetylglucosamine-1-phosphate (GlcNAc-1-P), which is converted into UDP-GlcNAc by the transfer of uridine 5-monophosphate (from uridine 5-triphosphate), a reaction catalyzed by the N-terminal domain. The sequence is that of Bifunctional protein GlmU from Desulfitobacterium hafniense (strain Y51).